Here is a 248-residue protein sequence, read N- to C-terminus: Large ribosomal subunit protein uL1 (248 aa).

Belongs to the universal ribosomal protein uL1 family. Part of the 50S ribosomal subunit.

In terms of biological role, binds directly to 23S rRNA. The L1 stalk is quite mobile in the ribosome, and is involved in E site tRNA release. Protein L1 is also a translational repressor protein, it controls the translation of the L11 operon by binding to its mRNA. This Orientia tsutsugamushi (strain Boryong) (Rickettsia tsutsugamushi) protein is Large ribosomal subunit protein uL1.